Consider the following 237-residue polypeptide: Lycopene beta-cyclase (237 aa).

7 helical membrane-spanning segments follow: residues 3–23 (TSYLTFLAVAVGPPLVALGVV), 38–58 (VGILLALALSYTTPWDNYLIA), 80–100 (EYLFVITQTLLTGLWVQALPL), 113–133 (AVLGALAGVLVGCGGAVLLTV), 137–157 (FYIGAIIAWAAPVLALQWAVG), 170–192 (AAVLVPTLFLSAADRYAIADGIW), and 213–233 (AFFFVTNVFVSQGLILYAWVL).

The protein belongs to the lycopene beta-cyclase family.

The protein localises to the cell membrane. It carries out the reaction a carotenoid psi-end group = a carotenoid beta-end derivative. The catalysed reaction is all-trans-lycopene = gamma-carotene. It catalyses the reaction gamma-carotene = all-trans-beta-carotene. It functions in the pathway carotenoid biosynthesis; beta-carotene biosynthesis. Functionally, catalyzes the cyclization of both ends of lycopene to form beta-carotene, a retinal precursor. Is required for bacteriorhodopsin biogenesis, a light-driven proton pump with a covalently bound retinal cofactor. The protein is Lycopene beta-cyclase of Halobacterium salinarum (strain ATCC 29341 / DSM 671 / R1).